We begin with the raw amino-acid sequence, 1274 residues long: MAVRQAATAGTPGPRREEEAALLFERAHYRHDPRWLLPVTPRLCLACALELLPDPGVSLVRKKHMLSCFQDALVRHTSLVTQLVSQDQRVCIHFISVLFGLLCSMEDGSVTDLCIEVLIQITTQLKLEQTIRCLLDECHKELCNMPSMRGSLATLTLLGKLVDAIPALADELVMEHGNLMEHLLRGLVYPSEGIQASVCYLYGKLYSSPVAAEMLSGHFREKLFPLFLSILDGAQTKELQINCLGLLRQLLKYDLFVSMIMNQDGLGESAKNIEGSSGNTSLPLVLKKLLLSRDETLQVASAHCITAVLVHSPAKHASAFIHADIPEFLFEHLSSSSEVLVWSSCNCLTLLVEEPLFFSKCHTVYGIEAVVRSLQGSLKMNNIELHKQGLLLFAEILTRQPEEIKLFTSSAMCRDAGRALQEAVSSPVLEVAAEALKATSAFLRKDHQSTPPVQYGELQALLEAMLNRCAEFSQTLLSRRPLGHASSRDSEKAILQRGKFLLSTLEGFRSACRLAIEFQSEPSAQENPFTAPSAKKEDTLEAFSEFLLSACDSLCIPMVMRHLEQTTHPALMEVFLSILHNLFVIVPHMKEKFSKKLASSSFIRLTLELKARFCSGLSHSALNQVCSNFLYYMCLNLLSAPEKTGPPSKEELSAVSELLQHGLPQISSRSPESLAFLSDRQYMEGAARQRQYCILLLFYLAYIHEDRFVSEAELFEAVQSFLLSLQDQGERPPLVVFKASIYLLAICQDKDNTLRETMVSAIRKFLEGIPDLQLVYTHHPLLLRFFLLYPELMSRYGHRVLELWFFWEESSYEELDDVTSAGQPALPASLVVLFQLLRSIPSILLILLDLIYSSPVDTAHKVLISLRTFLRRNEDIQVGGLIRGHFLLILQRLLVEHGASPSGASGNLPLLLSLLSLMQLRNVSEQELDSVAMKLLHQVSKLCGKCSPTDVDILQPSFNFLYWSLHQTTPSSQKRAAAVLLSSTGLMELLEKMLALTLAKADSPRTALLCSAWLLTASFSAQQHKGSLQVHQTLSVEMDQVLKALSFPKKKAALLSAAILCFLRTALRQSFSSALVALVPSGAQPLPATKDTVLAPLRMSQVRSLVIGLQNLLVQKDPLLSQACVGCLEALLDYLDARSPDIALHVASQPWNRFLLFTLLDAGENSFLRPEILRLMTLFMRYRSSSVLSHEEVGDVLQGVALADLSTLSNTTLQALHGFFQQLQSMGHLADHSMAQTLQASLEGLPPSTSSGQPPLQDMLCLGGVAVSLSHIRN.

Expressed predominantly in testis. Weakly expressed in spleen and thymus. Expressed in the ovaries, Fallopian tubes and uterus.

Required for normal meiotic chromosome synapsis. May be involved in the formation of meiotic double-strand breaks (DSBs) in spermatocytes. In Homo sapiens (Human), this protein is Meiosis inhibitor protein 1.